The primary structure comprises 131 residues: UPF0251 protein MMP0619 (131 aa).

The protein belongs to the UPF0251 family.

This Methanococcus maripaludis (strain DSM 14266 / JCM 13030 / NBRC 101832 / S2 / LL) protein is UPF0251 protein MMP0619.